The chain runs to 208 residues: ATP phosphoribosyltransferase (208 aa).

This sequence belongs to the ATP phosphoribosyltransferase family. Short subfamily. Heteromultimer composed of HisG and HisZ subunits.

It localises to the cytoplasm. It catalyses the reaction 1-(5-phospho-beta-D-ribosyl)-ATP + diphosphate = 5-phospho-alpha-D-ribose 1-diphosphate + ATP. Its pathway is amino-acid biosynthesis; L-histidine biosynthesis; L-histidine from 5-phospho-alpha-D-ribose 1-diphosphate: step 1/9. Its function is as follows. Catalyzes the condensation of ATP and 5-phosphoribose 1-diphosphate to form N'-(5'-phosphoribosyl)-ATP (PR-ATP). Has a crucial role in the pathway because the rate of histidine biosynthesis seems to be controlled primarily by regulation of HisG enzymatic activity. This is ATP phosphoribosyltransferase from Thermotoga neapolitana (strain ATCC 49049 / DSM 4359 / NBRC 107923 / NS-E).